The sequence spans 1315 residues: Claspin (1315 aa).

2 disordered regions span residues 22–276 and 345–474; these read EAAD…AARL and PADA…EQKT. 6 positions are modified to phosphoserine: S26, S42, S46, S53, S65, and S67. Acidic residues predominate over residues 65 to 74; the sequence is SDSEAEDRDD. Over residues 91–101 the composition is skewed to polar residues; sequence NLHSGKSQSRS. The span at 108-118 shows a compositional bias: acidic residues; it reads DSDESDMEETP. 3 positions are modified to phosphoserine: S109, S112, and S119. Residues 119–128 show a composition bias toward polar residues; that stretch reads SQESPETQEA. 2 stretches are compositionally biased toward basic and acidic residues: residues 153-178 and 186-197; these read LLRE…MEKI and TRCEESDADRPL. Positions 159–187 form a coiled coil; it reads EGKAKSKRRLEKEERTMEKIRRLKKKETR. Residues 205 to 228 show a composition bias toward acidic residues; sequence EDSDLFETGLEEENDSALEDEESL. The residue at position 220 (S220) is a Phosphoserine. Basic residues predominate over residues 235 to 245; that stretch reads VKNKVKNRKKK. S255 is modified (phosphoserine). Basic and acidic residues-rich tracts occupy residues 391–415 and 455–470; these read ACGK…DDRP and EELK…EGMP. Phosphoserine is present on S522. A coiled-coil region spans residues 599-626; the sequence is EKLQMLKAKLQEAMKLRRLEERQKRQAL. The disordered stretch occupies residues 625-691; sequence ALFKLDNEDG…SSDIGKSVAL (67 aa). Positions 632-657 are enriched in acidic residues; the sequence is EDGFEEEEEEEEMTDESEEDGEEETT. Basic and acidic residues predominate over residues 669–679; that stretch reads KDEKETDKENT. S698, S701, S709, S722, and S740 each carry phosphoserine. The segment at 713–750 is disordered; that stretch reads MGYFPTEEKSETDEYLAKQSDKLDEDDSSSLLTKESSH. The segment covering 741–750 has biased composition (low complexity); that stretch reads SSLLTKESSH. A phosphoserine mark is found at S785, S787, S810, S816, and S823. K868 is subject to N6-acetyllysine. 2 CKB motif repeats span residues 887–896 and 917–926; these read ELLDLCTGQF and ELLNLCSGKF. Phosphothreonine; by CHEK1 is present on T893. Disordered regions lie at residues 924 to 1002 and 1032 to 1052; these read GKFP…NDEE and EDEA…DGEE. At S932 the chain carries Phosphoserine. The CKB motif 3 repeat unit spans residues 954–963; sequence EALALCSGSF. An acidic patch region spans residues 966-1063; the sequence is DREEEGEEEE…DEYEEDVIDE (98 aa). Acidic residues-rich tracts occupy residues 967–977, 990–1002, and 1043–1052; these read REEEGEEEEFG, SDED…NDEE, and GSEDEYDGEE. S990, S996, and S998 each carry phosphoserine. Positions 1001 to 1036 form a coiled coil; the sequence is EELALDLEDDEEELLKQSEKMKRQMRLKKYLEDEAE. S1133 and S1265 each carry phosphoserine. Residues 1264 to 1315 form a disordered region; it reads LSPTKAEAAKDSSKPQVRRRGLSSMMSPSPKRLKTNGSSPGPKRSIFRYLES.

This sequence belongs to the claspin family. As to quaternary structure, interacts (phosphorylation-dependent) with CHEK1; regulates CLSPN function in checkpoint for DNA damage and replication. Interacts with ATR and RAD9A and these interactions are slightly reduced during checkpoint activation. Interacts with BRCA1 and this interaction increases during checkpoint activation. Interacts with TIMELESS; the interaction is required for leading-strand replication. Associates with the MCM2-7 complex and other replisome factors. Interacts (via the acidic patch) with CDC7; the interaction is required for phosphorylation of MCM proteins and CLASPIN by CDC7. Interacts with PCNA. Interacts with FZR1. Phosphorylated. Undergoes ATR-dependent phosphorylation by CHEK1 during activation of DNA replication or damage checkpoints. Phosphorylation by CSNK1G1/CK1 promotes CHEK1 binding. Phosphorylated by CDC7 during DNA replication, phosphorylation inhibits interaction between the acidic patch and N-terminal segments leading to increased binding to DNA and PCNA. Post-translationally, ubiquitinated by the anaphase promoting complex/cyclosome (APC/C) during G1 phase, leading to its degradation by the proteasome. Ubiquitination is mediated via its interaction with FZR1/CDH1. Following DNA damage, it is deubiquitinated by USP28 in G2 phase, preventing its degradation. In terms of processing, proteolytically cleaved by caspase-7 (CASP7) in response to apoptosis, leading to its inactivation.

Its subcellular location is the nucleus. Required for checkpoint mediated cell cycle arrest in response to inhibition of DNA replication or to DNA damage induced by both ionizing and UV irradiation. Adapter protein which binds to BRCA1 and the checkpoint kinase CHEK1 and facilitates the ATR-dependent phosphorylation of both proteins. Also required to maintain normal rates of replication fork progression during unperturbed DNA replication. Binds directly to DNA, with particular affinity for branched or forked molecules and interacts with multiple protein components of the replisome such as the MCM2-7 complex and TIMELESS. Important for initiation of DNA replication, recruits kinase CDC7 to phosphorylate MCM2-7 components. This is Claspin (Clspn) from Mus musculus (Mouse).